The chain runs to 133 residues: MSRVITDPIADMLVRIKNATARKHKNVLIPFSNKKSKILEIIKDQGYIFDFAIEGDSVKKNLNVTLKYKNNISVITGVKRISKPGLKVYSSVEDLPMVLNGYGIAIISTSKGVLTDKQARKENVGGEIVAYIW.

Belongs to the universal ribosomal protein uS8 family. As to quaternary structure, part of the 30S ribosomal subunit. Contacts proteins S5 and S12.

Functionally, one of the primary rRNA binding proteins, it binds directly to 16S rRNA central domain where it helps coordinate assembly of the platform of the 30S subunit. This chain is Small ribosomal subunit protein uS8, found in Mycoplasma mobile (strain ATCC 43663 / 163K / NCTC 11711) (Mesomycoplasma mobile).